The primary structure comprises 447 residues: GTPase Der (447 aa).

EngA-type G domains follow at residues 4–165 (KIIA…PEEE) and 180–357 (LQIV…KIWN). GTP-binding positions include 10 to 17 (GRPNVGKS), 57 to 61 (DTPGL), 119 to 122 (NKCE), 186 to 193 (GRPNAGKS), 233 to 237 (DTAGL), and 298 to 301 (NKWD). The region spanning 358–443 (KKIATSKLNE…PIRFTYVKTK (86 aa)) is the KH-like domain.

Belongs to the TRAFAC class TrmE-Era-EngA-EngB-Septin-like GTPase superfamily. EngA (Der) GTPase family. As to quaternary structure, associates with the 50S ribosomal subunit.

Its function is as follows. GTPase that plays an essential role in the late steps of ribosome biogenesis. This Rickettsia akari (strain Hartford) protein is GTPase Der.